A 362-amino-acid chain; its full sequence is S-adenosylmethionine:tRNA ribosyltransferase-isomerase (362 aa).

This sequence belongs to the QueA family. As to quaternary structure, monomer.

The protein localises to the cytoplasm. The catalysed reaction is 7-aminomethyl-7-carbaguanosine(34) in tRNA + S-adenosyl-L-methionine = epoxyqueuosine(34) in tRNA + adenine + L-methionine + 2 H(+). It participates in tRNA modification; tRNA-queuosine biosynthesis. Transfers and isomerizes the ribose moiety from AdoMet to the 7-aminomethyl group of 7-deazaguanine (preQ1-tRNA) to give epoxyqueuosine (oQ-tRNA). The sequence is that of S-adenosylmethionine:tRNA ribosyltransferase-isomerase from Yersinia enterocolitica serotype O:8 / biotype 1B (strain NCTC 13174 / 8081).